Reading from the N-terminus, the 191-residue chain is Protein Ves (191 aa).

This sequence belongs to the Ves family.

This Escherichia coli O7:K1 (strain IAI39 / ExPEC) protein is Protein Ves.